Reading from the N-terminus, the 304-residue chain is Acetyl-coenzyme A carboxylase carboxyl transferase subunit beta (304 aa).

The CoA carboxyltransferase N-terminal domain maps to 23 to 292 (VWTKCDSCGQ…PNPEAPREGV (270 aa)). Zn(2+)-binding residues include C27, C30, C46, and C49. The C4-type zinc finger occupies 27-49 (CDSCGQVLYRAELERNLEVCPKC). The disordered stretch occupies residues 284–304 (NPEAPREGVVVPPVPDQEPEA). Positions 295–304 (PPVPDQEPEA) are enriched in pro residues.

Belongs to the AccD/PCCB family. Acetyl-CoA carboxylase is a heterohexamer composed of biotin carboxyl carrier protein (AccB), biotin carboxylase (AccC) and two subunits each of ACCase subunit alpha (AccA) and ACCase subunit beta (AccD). Requires Zn(2+) as cofactor.

It is found in the cytoplasm. The enzyme catalyses N(6)-carboxybiotinyl-L-lysyl-[protein] + acetyl-CoA = N(6)-biotinyl-L-lysyl-[protein] + malonyl-CoA. Its pathway is lipid metabolism; malonyl-CoA biosynthesis; malonyl-CoA from acetyl-CoA: step 1/1. Its function is as follows. Component of the acetyl coenzyme A carboxylase (ACC) complex. Biotin carboxylase (BC) catalyzes the carboxylation of biotin on its carrier protein (BCCP) and then the CO(2) group is transferred by the transcarboxylase to acetyl-CoA to form malonyl-CoA. This Escherichia coli O6:K15:H31 (strain 536 / UPEC) protein is Acetyl-coenzyme A carboxylase carboxyl transferase subunit beta.